Reading from the N-terminus, the 273-residue chain is Formamidopyrimidine-DNA glycosylase (273 aa).

The active-site Schiff-base intermediate with DNA is proline 2. Catalysis depends on glutamate 3, which acts as the Proton donor. Lysine 58 serves as the catalytic Proton donor; for beta-elimination activity. Histidine 92, arginine 111, and arginine 153 together coordinate DNA. The segment at arginine 238–tyrosine 272 adopts an FPG-type zinc-finger fold. The active-site Proton donor; for delta-elimination activity is the arginine 262.

It belongs to the FPG family. In terms of assembly, monomer. Zn(2+) is required as a cofactor.

The enzyme catalyses Hydrolysis of DNA containing ring-opened 7-methylguanine residues, releasing 2,6-diamino-4-hydroxy-5-(N-methyl)formamidopyrimidine.. It catalyses the reaction 2'-deoxyribonucleotide-(2'-deoxyribose 5'-phosphate)-2'-deoxyribonucleotide-DNA = a 3'-end 2'-deoxyribonucleotide-(2,3-dehydro-2,3-deoxyribose 5'-phosphate)-DNA + a 5'-end 5'-phospho-2'-deoxyribonucleoside-DNA + H(+). Its function is as follows. Involved in base excision repair of DNA damaged by oxidation or by mutagenic agents. Acts as a DNA glycosylase that recognizes and removes damaged bases. Has a preference for oxidized purines, such as 7,8-dihydro-8-oxoguanine (8-oxoG). Has AP (apurinic/apyrimidinic) lyase activity and introduces nicks in the DNA strand. Cleaves the DNA backbone by beta-delta elimination to generate a single-strand break at the site of the removed base with both 3'- and 5'-phosphates. This Rickettsia canadensis (strain McKiel) protein is Formamidopyrimidine-DNA glycosylase.